We begin with the raw amino-acid sequence, 1733 residues long: Collagen alpha-1(XXIV) chain (1733 aa).

An N-terminal signal peptide occupies residues 1-35; the sequence is MHLGAYRTRHGKVSPTTETKLFLRFIVLCVVWISV. Positions 102-229 constitute a Laminin G-like domain; the sequence is ISLRQPLTVL…TVCQLEIMPS (128 aa). Asn-157 carries N-linked (GlcNAc...) asparagine glycosylation. Residues 257–335 form a disordered region; sequence PHTAGMPTRH…SQEHQTPRAQ (79 aa). The span at 312–324 shows a compositional bias: polar residues; the sequence is IPNNRSNGSATVH. Residues Asn-366, Asn-396, and Asn-448 are each glycosylated (N-linked (GlcNAc...) asparagine). Residues 505–1499 form a disordered region; that stretch reads YLRGPKGDPG…GPPGAPGPRR (995 aa). 15 consecutive Collagen-like domains span residues 506–561, 577–636, 679–738, 742–801, 802–861, 886–945, 946–1005, 1006–1065, 1072–1131, 1135–1189, 1191–1215, 1220–1279, 1316–1375, 1376–1435, and 1439–1498; these read LRGP…PGLS, GLVG…KGVR, GPAG…KGEQ, GEPG…PGQN, GPEG…KGEV, GSIG…KGQR, GPRG…SGDV, GPAG…PGPR, GEEG…PGQR, GKKG…GIPG, RGHQ…PGED, GPPG…KGER, GVDG…KGEQ, GLPG…AGIV, and GPKG…PGPR. Residues 512-524 are compositionally biased toward pro residues; the sequence is DPGPPGPPGPMGI. 2 stretches are compositionally biased toward low complexity: residues 573–599 and 699–708; these read PGLL…LPGL and PGVTGSVGPA. The segment covering 776-789 has biased composition (pro residues); sequence DPGPQGPSGPPGPE. Residues 912 to 921 show a composition bias toward pro residues; it reads PGPPGAPGPM. The span at 923–944 shows a compositional bias: low complexity; the sequence is PLGLPGLVGARGAPGSPGPKGQ. Positions 1045-1054 are enriched in gly residues; it reads GAKGDGGPAG. Over residues 1056 to 1074 the composition is skewed to low complexity; it reads AGATGEPGPRGEPGAPGEE. The span at 1084–1093 shows a compositional bias: gly residues; sequence GAPGGSGLPG. Positions 1175-1205 are enriched in low complexity; sequence PLGLMGPEGEPGIPGYRGHQGQPGPSGLPGP. A compositionally biased stretch (basic and acidic residues) spans 1237–1246; the sequence is TGEHGEEGYK. Over residues 1323 to 1339 the composition is skewed to low complexity; it reads YPGKPGLPGKQGLLGVP. Residues 1352 to 1361 show a composition bias toward gly residues; the sequence is GPQGGKGASG. Composition is skewed to low complexity over residues 1371–1386 and 1434–1444; these read PKGE…VPGQ and IVGIVGPKGPI. A compositionally biased stretch (pro residues) spans 1485–1495; sequence QPGPPGPPGAP. Residues 1534-1733 form the Fibrillar collagen NC1 domain; sequence SDIFKTLTYL…YIESNSVCFL (200 aa).

This sequence belongs to the fibrillar collagen family. In terms of tissue distribution, expressed in skeleton. Found at ossification centers of the craniofacial, axial and appendicular skeleton. Also expressed in retina and to a lower extent in cornea, skin and tendon.

The protein localises to the secreted. The protein resides in the extracellular space. It localises to the extracellular matrix. Involved in osteoblast differentiation. This is Collagen alpha-1(XXIV) chain (Col24a1) from Mus musculus (Mouse).